The chain runs to 315 residues: Methionyl-tRNA formyltransferase (315 aa).

Residue Ser-113–Pro-116 coordinates (6S)-5,6,7,8-tetrahydrofolate.

Belongs to the Fmt family.

The enzyme catalyses L-methionyl-tRNA(fMet) + (6R)-10-formyltetrahydrofolate = N-formyl-L-methionyl-tRNA(fMet) + (6S)-5,6,7,8-tetrahydrofolate + H(+). Its function is as follows. Attaches a formyl group to the free amino group of methionyl-tRNA(fMet). The formyl group appears to play a dual role in the initiator identity of N-formylmethionyl-tRNA by promoting its recognition by IF2 and preventing the misappropriation of this tRNA by the elongation apparatus. The protein is Methionyl-tRNA formyltransferase of Salmonella enteritidis PT4 (strain P125109).